Reading from the N-terminus, the 338-residue chain is Glycerol-3-phosphate dehydrogenase [NAD(P)+] (338 aa).

3 residues coordinate NADPH: Ser-13, Trp-14, and Lys-108. Positions 108, 139, and 141 each coordinate sn-glycerol 3-phosphate. Ala-143 provides a ligand contact to NADPH. Lys-194, Asp-247, Ser-257, Arg-258, and Asn-259 together coordinate sn-glycerol 3-phosphate. The active-site Proton acceptor is Lys-194. Arg-258 provides a ligand contact to NADPH. Positions 282 and 284 each coordinate NADPH.

The protein belongs to the NAD-dependent glycerol-3-phosphate dehydrogenase family.

The protein resides in the cytoplasm. It catalyses the reaction sn-glycerol 3-phosphate + NAD(+) = dihydroxyacetone phosphate + NADH + H(+). The catalysed reaction is sn-glycerol 3-phosphate + NADP(+) = dihydroxyacetone phosphate + NADPH + H(+). Its pathway is membrane lipid metabolism; glycerophospholipid metabolism. In terms of biological role, catalyzes the reduction of the glycolytic intermediate dihydroxyacetone phosphate (DHAP) to sn-glycerol 3-phosphate (G3P), the key precursor for phospholipid synthesis. The polypeptide is Glycerol-3-phosphate dehydrogenase [NAD(P)+] (Streptococcus agalactiae serotype V (strain ATCC BAA-611 / 2603 V/R)).